Consider the following 1352-residue polypeptide: Ubiquitin carboxyl-terminal hydrolase 31 (1352 aa).

Positions 1–16 (MSKVTAPGSGPPAAAS) are enriched in low complexity. 2 disordered regions span residues 1-62 (MSKV…RSVG) and 79-119 (SSEG…PPAC). A compositionally biased stretch (gly residues) spans 32–43 (RAGGGGAGGPGA). Residues 44 to 62 (SGPAAPSSPSSPSSARSVG) are compositionally biased toward low complexity. The segment covering 95 to 117 (PPGPAAAPTPPPCPPPPASPAPP) has biased composition (pro residues). The USP domain occupies 128–765 (AGLRNHGNTC…TAYILFYQRR (638 aa)). The active-site Nucleophile is the Cys-137. Residues 162 to 185 (RAGRPEPSPDPEQPAGRGAQGQGE) are disordered. The active-site Proton acceptor is the His-723. 3 disordered regions span residues 812-835 (LASL…FSTR), 919-939 (SSSY…AVGR), and 951-1352 (DESD…QKPQ). Positions 958–970 (LNSSVVDTQSKHS) are enriched in polar residues. 4 stretches are compositionally biased toward low complexity: residues 992 to 1001 (VDQSDSVDSS), 1051 to 1070 (SSLS…SLKP), 1078 to 1089 (DSSSRGSGRHSS), and 1101 to 1138 (PKSQ…GPAT). Basic and acidic residues predominate over residues 1148-1159 (RTSDHSLSREGS). The segment covering 1160 to 1181 (RQSLGSDRASATSTSKPNSPRV) has biased composition (polar residues). A compositionally biased stretch (low complexity) spans 1198-1210 (SSSMASLRSPSTS). Basic and acidic residues-rich tracts occupy residues 1215–1225 (LKRDSKSEDKG) and 1234–1243 (RQKETRRSTD). A compositionally biased stretch (low complexity) spans 1251–1264 (SKKAGGSSVKSVCK). Residue Lys-1264 is modified to N6-acetyllysine. Composition is skewed to polar residues over residues 1278-1290 (PASQ…TTGK) and 1341-1352 (MQTSARPSQKPQ).

The protein belongs to the peptidase C19 family. Post-translationally, acetylated at Lys-1264. Acetylation decreases activity. Deacetylated by SIRT1. Widely expressed.

The enzyme catalyses Thiol-dependent hydrolysis of ester, thioester, amide, peptide and isopeptide bonds formed by the C-terminal Gly of ubiquitin (a 76-residue protein attached to proteins as an intracellular targeting signal).. Deubiquitinase that recognizes and hydrolyzes the peptide bond at the C-terminal Gly of ubiquitin. May play a role in the regulation of NF-kappa-B signaling pathway by deubiquitinating TRAF2. Its function is as follows. (Microbial infection) Plays a positive role in foot-and-mouth disease and classical swine fever viral infection. Mechanistically, associates with internal ribosomal entry site (IRES) element within the 5'-untranslated region of viral genomes to promote translation of the virus-encoded polyprotein. This is Ubiquitin carboxyl-terminal hydrolase 31 (USP31) from Homo sapiens (Human).